Consider the following 397-residue polypeptide: S-adenosylmethionine synthase (397 aa).

Residue H17 coordinates ATP. D19 is a binding site for Mg(2+). Residue E45 participates in K(+) binding. Residues E58 and Q101 each contribute to the L-methionine site. Residues 101 to 111 (QSPDIAQGVDK) are flexible loop. ATP-binding positions include 176-178 (DGK), 243-244 (RF), D252, 258-259 (RK), and K279. Residue D252 participates in L-methionine binding. K283 is an L-methionine binding site.

Belongs to the AdoMet synthase family. In terms of assembly, homotetramer; dimer of dimers. Requires Mg(2+) as cofactor. The cofactor is K(+).

Its subcellular location is the cytoplasm. The catalysed reaction is L-methionine + ATP + H2O = S-adenosyl-L-methionine + phosphate + diphosphate. It participates in amino-acid biosynthesis; S-adenosyl-L-methionine biosynthesis; S-adenosyl-L-methionine from L-methionine: step 1/1. Its function is as follows. Catalyzes the formation of S-adenosylmethionine (AdoMet) from methionine and ATP. The overall synthetic reaction is composed of two sequential steps, AdoMet formation and the subsequent tripolyphosphate hydrolysis which occurs prior to release of AdoMet from the enzyme. In Staphylococcus aureus (strain MRSA252), this protein is S-adenosylmethionine synthase.